The primary structure comprises 426 residues: 3-phosphoshikimate 1-carboxyvinyltransferase (426 aa).

The 3-phosphoshikimate site is built by K21, S22, and R26. Position 21 (K21) interacts with phosphoenolpyruvate. 2 residues coordinate phosphoenolpyruvate: G93 and R121. The 3-phosphoshikimate site is built by S165, Q167, D313, and K340. Residue Q167 coordinates phosphoenolpyruvate. The Proton acceptor role is filled by D313. The phosphoenolpyruvate site is built by R344 and R386.

The protein belongs to the EPSP synthase family. Monomer.

Its subcellular location is the cytoplasm. The enzyme catalyses 3-phosphoshikimate + phosphoenolpyruvate = 5-O-(1-carboxyvinyl)-3-phosphoshikimate + phosphate. It participates in metabolic intermediate biosynthesis; chorismate biosynthesis; chorismate from D-erythrose 4-phosphate and phosphoenolpyruvate: step 6/7. Catalyzes the transfer of the enolpyruvyl moiety of phosphoenolpyruvate (PEP) to the 5-hydroxyl of shikimate-3-phosphate (S3P) to produce enolpyruvyl shikimate-3-phosphate and inorganic phosphate. The chain is 3-phosphoshikimate 1-carboxyvinyltransferase from Solibacter usitatus (strain Ellin6076).